A 297-amino-acid chain; its full sequence is Acetylglutamate kinase (297 aa).

Residues 68 to 69, arginine 90, and asparagine 189 each bind substrate; that span reads GG.

It belongs to the acetylglutamate kinase family. ArgB subfamily.

Its subcellular location is the cytoplasm. It carries out the reaction N-acetyl-L-glutamate + ATP = N-acetyl-L-glutamyl 5-phosphate + ADP. It participates in amino-acid biosynthesis; L-arginine biosynthesis; N(2)-acetyl-L-ornithine from L-glutamate: step 2/4. In terms of biological role, catalyzes the ATP-dependent phosphorylation of N-acetyl-L-glutamate. This is Acetylglutamate kinase from Akkermansia muciniphila (strain ATCC BAA-835 / DSM 22959 / JCM 33894 / BCRC 81048 / CCUG 64013 / CIP 107961 / Muc).